The chain runs to 347 residues: L-Ala-D/L-amino acid epimerase (347 aa).

156–158 provides a ligand contact to substrate; it reads KLK. Asp-183, Glu-211, and Asp-237 together coordinate Mg(2+). Substrate contacts are provided by residues Lys-259 and 309–311; that span reads DID.

It belongs to the mandelate racemase/muconate lactonizing enzyme family. Mg(2+) serves as cofactor.

Functionally, dipeptide epimerase with a broad substrate specificity. Catalyzes the epimerization of L-Ala-L-Ala, L-Ala-L-Ser, L-Ala-L-Thr, L-Ala-L-Met, L-Ala-L-Phe, L-Ala-L-Tyr, L-Gly-L-Asp, L-Val-L-Asp, L-Val-L-Glu and L-Val-L-Phe (in vitro). Can also catalyze the epimerization of L-Ala-L-Glu, but with lower efficiency. The sequence is that of L-Ala-D/L-amino acid epimerase from Pedosphaera parvula (strain Ellin514).